We begin with the raw amino-acid sequence, 452 residues long: Phenylalanine-4-hydroxylase (452 aa).

At serine 16 the chain carries Phosphoserine; by PKA. An ACT domain is found at 36–114 (SLIFSLKEEV…TVHELSRDKK (79 aa)). Fe cation-binding residues include histidine 285, histidine 290, and glutamate 330.

The protein belongs to the biopterin-dependent aromatic amino acid hydroxylase family. As to quaternary structure, homodimer and homotetramer. Fe(2+) serves as cofactor. Post-translationally, phosphorylation at Ser-16 increases basal activity and facilitates activation by the substrate phenylalanine.

The catalysed reaction is (6R)-L-erythro-5,6,7,8-tetrahydrobiopterin + L-phenylalanine + O2 = (4aS,6R)-4a-hydroxy-L-erythro-5,6,7,8-tetrahydrobiopterin + L-tyrosine. It participates in amino-acid degradation; L-phenylalanine degradation; acetoacetate and fumarate from L-phenylalanine: step 1/6. With respect to regulation, N-terminal region of PAH is thought to contain allosteric binding sites for phenylalanine and to constitute an 'inhibitory' domain that regulates the activity of a catalytic domain in the C-terminal portion of the molecule. Its function is as follows. Catalyzes the hydroxylation of L-phenylalanine to L-tyrosine. In Homo sapiens (Human), this protein is Phenylalanine-4-hydroxylase (PAH).